The primary structure comprises 87 residues: Diazepam-binding inhibitor-like 5 (87 aa).

An ACB domain is found at 2–87; it reads SQVEFEMACA…VEELKKKEPC (86 aa). An acyl-CoA-binding positions include 29–33, Lys-55, and Tyr-74; that span reads YSFYK.

Belongs to the ACBP family. Exclusively expressed in late spermatids and spermatozoa. Not found in epididymis, spleen, bone marrow, skin, liver, brain, heart, kidney, muscle.

It localises to the cytoplasm. In terms of biological role, may be involved in the energy metabolism of the mature sperm. The polypeptide is Diazepam-binding inhibitor-like 5 (Dbil5) (Mus musculus (Mouse)).